A 311-amino-acid polypeptide reads, in one-letter code: Taste receptor type 2 member 40 (311 aa).

Topologically, residues 1–9 (MSSLFSSFC) are extracellular. The helical transmembrane segment at 10–30 (LVIAIFESVVGLLGNGTIVAV) threads the bilayer. At 31-55 (SSTSCIRSKILSSYDVIVIFLSLSR) the chain is on the cytoplasmic side. Residues 56–76 (FFLQLWMILDFLLIFFCQPSY) traverse the membrane as a helical segment. Over 77-87 (YEENLFVTFKT) the chain is Extracellular. Residues 88–108 (VFIFLNSYSFWFAAWLSVFYC) form a helical membrane-spanning segment. Over 109-128 (VKVASFTQSFLSWLKQRIAS) the chain is Cytoplasmic. A helical transmembrane segment spans residues 129–149 (LIPWMLITSSLFSFATSLPFF). At 150–178 (WDSYNAHSNFTTPLTMTNSSKRITTRKTN) the chain is on the extracellular side. A helical transmembrane segment spans residues 179–199 (LIFLILLCNVGIALPSIMLVF). The Cytoplasmic portion of the chain corresponds to 200–235 (SSILLIRSLWRHTRQMQNNATGFRDPSLEALIGAIK). The chain crosses the membrane as a helical span at residues 236-256 (TVFSFLLLYITNFIALILILS). Topologically, residues 257–266 (DTFVPLSTEE) are extracellular. Residues 267 to 287 (AICVVVVAACPAGQSMVLIWS) form a helical membrane-spanning segment. The Cytoplasmic portion of the chain corresponds to 288–311 (NPRFRELLSSILHYVNSCVRARCS).

The protein belongs to the G-protein coupled receptor T2R family. Expressed in the oral cavity, as well as in the gastrointestinal tract, including in the upper palate, tongue, proventriculus, ventriculus, duodenum, jejunum, ileum, cecum and colon.

It is found in the cell membrane. In terms of biological role, bitter taste receptor. Binds quinine, dextromethorphan, diphenhydramine, diphenidol, chlorpheniramine, diphenidol, chloramphenicol, chloroquine and coumarin, this latter being a weak agonist, as well as epiquinidine, ethylhydrocupreine and quinidine. The polypeptide is Taste receptor type 2 member 40 (TAS2R40) (Gallus gallus (Chicken)).